The primary structure comprises 708 residues: FACT complex subunit SSRP1 (708 aa).

Alanine 2 is subject to N-acetylalanine. Lysine 90 participates in a covalent cross-link: Glycyl lysine isopeptide (Lys-Gly) (interchain with G-Cter in SUMO2). At threonine 170 the chain carries Phosphothreonine. Lysine 233 is modified (N6-acetyllysine). Glycyl lysine isopeptide (Lys-Gly) (interchain with G-Cter in SUMO2) cross-links involve residues lysine 296 and lysine 364. Residue lysine 413 is modified to N6-acetyllysine. Residue tyrosine 441 is modified to Phosphotyrosine. Serine 444 carries the phosphoserine modification. Residue tyrosine 452 is modified to Phosphotyrosine. Positions 458 to 708 (EEGKIREENA…SEDSASGSDE (251 aa)) are disordered. Over residues 470–496 (SSDDSGEETDESFNPGEEEEDVAEEFD) the composition is skewed to acidic residues. Phosphoserine is present on serine 471. Residues 497–507 (SNASASSSSNE) are compositionally biased toward low complexity. The residue at position 510 (serine 510) is a Phosphoserine; by CK2. 2 stretches are compositionally biased toward basic and acidic residues: residues 512–546 (REEKKREQLKRAKMAKDRKSRRKSSEAKKGKDPNA) and 577–624 (LSKK…SSKR). Lysine 542 is modified (N6-acetyllysine). The HMG box DNA-binding region spans 547–615 (PKRPMSAYML…EYEKAMKEYE (69 aa)). A compositionally biased stretch (basic residues) spans 625–634 (DKSKKKKKVK). Positions 643–659 (PSRGSSSKSSSRQLSDS) are enriched in low complexity. Position 657 is a phosphoserine; by CK2 (serine 657). Serine 659, serine 667, serine 668, serine 671, serine 672, and serine 673 each carry phosphoserine. At serine 688 the chain carries Phosphoserine; by CK2. Positions 695–708 (TPPSSEDSASGSDE) are enriched in polar residues.

The protein belongs to the SSRP1 family. As to quaternary structure, interacts with MYOG (via C-terminal region). Component of the FACT complex, a stable heterodimer of SSRP1 and SUPT16H. Also a component of a CK2-SPT16-SSRP1 complex which forms following UV irradiation, composed of SSRP1, SUPT16H, CSNK2A1, CSNK2A2 and CSNK2B. Binds to histone H3-H4 tetramers, but not to intact nucleosomes. Identified in a centromere complex containing histones H2A, H2B and H4, and at least CENPA, CENPB, CENPC, CENPT, CENPN, HJURP, SUPT16H, SSRP1 and RSF1. Interacts with isoform gamma of TP63. Interacts with FYTTD1/UIF. Interacts with SRF. Interacts with NEK9. Phosphorylated by CK2 following UV but not gamma irradiation. Phosphorylation inhibits its DNA-binding activity. Post-translationally, ubiquitinated. Polyubiquitinated following caspase cleavage resulting in degradation of the N-terminal ubiquitinated part of the cleaved protein. In terms of processing, sumoylated.

The protein resides in the nucleus. The protein localises to the chromosome. Its subcellular location is the nucleolus. Its function is as follows. Component of the FACT complex, a general chromatin factor that acts to reorganize nucleosomes. The FACT complex is involved in multiple processes that require DNA as a template such as mRNA elongation, DNA replication and DNA repair. During transcription elongation the FACT complex acts as a histone chaperone that both destabilizes and restores nucleosomal structure. It facilitates the passage of RNA polymerase II and transcription by promoting the dissociation of one histone H2A-H2B dimer from the nucleosome, then subsequently promotes the reestablishment of the nucleosome following the passage of RNA polymerase II. The FACT complex is probably also involved in phosphorylation of 'Ser-392' of p53/TP53 via its association with CK2 (casein kinase II). Binds specifically to double-stranded DNA. Also acts as a transcriptional coactivator for p63/TP63. In Mus musculus (Mouse), this protein is FACT complex subunit SSRP1 (Ssrp1).